Consider the following 550-residue polypeptide: Chaperonin GroEL (550 aa).

ATP contacts are provided by residues 30–33 (TLGP), K51, 87–91 (DGTTT), G415, 479–481 (NAA), and D495.

This sequence belongs to the chaperonin (HSP60) family. As to quaternary structure, forms a cylinder of 14 subunits composed of two heptameric rings stacked back-to-back. Interacts with the co-chaperonin GroES.

The protein localises to the cytoplasm. The catalysed reaction is ATP + H2O + a folded polypeptide = ADP + phosphate + an unfolded polypeptide.. Its function is as follows. Together with its co-chaperonin GroES, plays an essential role in assisting protein folding. The GroEL-GroES system forms a nano-cage that allows encapsulation of the non-native substrate proteins and provides a physical environment optimized to promote and accelerate protein folding. The polypeptide is Chaperonin GroEL (Polaromonas sp. (strain JS666 / ATCC BAA-500)).